Consider the following 1135-residue polypeptide: Envelopment polyprotein (1135 aa).

Residues 1–18 form the signal peptide; that stretch reads MGIWKWLVMASLVWPVLT. The Lumenal portion of the chain corresponds to 19 to 485; it reads LRNVYDMKIE…VPGFHGWATA (467 aa). 11 disulfide bridges follow: Cys29–Cys151, Cys63–Cys157, Cys109–Cys128, Cys133–Cys138, Cys175–Cys185, Cys210–Cys247, Cys234–Cys351, Cys376–Cys435, Cys380–Cys389, Cys405–Cys424, and Cys452–Cys475. Asn134 is a glycosylation site (N-linked (GlcNAc...) asparagine; by host). 2 N-linked (GlcNAc...) asparagine; by host glycosylation sites follow: Asn235 and Asn347. N-linked (GlcNAc...) asparagine; by host glycosylation occurs at Asn399. Residues 486-506 form a helical membrane-spanning segment; that stretch reads ALLVTFCFGWVLIPAITFIIL. The Cytoplasmic segment spans residues 507–627; the sequence is TILKFIANIF…LNLFRYKSRC (121 aa). Residues 516-533 are binding to the ribonucleoprotein; sequence FHTSNQENRLKSVLRKIK. 2 CCHC-type zinc fingers span residues 545–565 and 570–591; these read CDVC…GVSC and CPYC…YKVC. Binding to the ribonucleoprotein regions lie at residues 588–605, 592–603, and 611–625; these read YKVC…KKTV, QVTHRFRDDLKK, and TPGC…RYKS. Residues 611–634 enclose the ITAM domain; it reads TPGCYRTLNLFRYKSRCYIFTMWI. The YxxL signature appears at 615 to 618; the sequence is YRTL. A helical membrane pass occupies residues 628-648; that stretch reads YIFTMWIFLLVLESILWAASA. Over 649-1105 the chain is Lumenal; sequence SETPLTPVWN…EWISGIFSGN (457 aa). Intrachain disulfides connect Cys735–Cys770, Cys739–Cys777, Cys751–Cys885, Cys765–Cys896, Cys780–Cys904, Cys806–Cys815, Cys823–Cys832, and Cys863–Cys867. The fusion loop stretch occupies residues 757–777; sequence YQYETSWGCNPSDCPGVGTGC. Residue Asn928 is glycosylated (N-linked (GlcNAc...) asparagine; by host). 5 disulfide bridges follow: Cys970/Cys1000, Cys993/Cys1045, Cys1010/Cys1015, Cys1046/Cys1051, and Cys1085/Cys1089. Residues 1106–1126 form a helical membrane-spanning segment; sequence WIVLIVLCVFLLFSLVLLSIL. Residues 1122 to 1135 are binding to the ribonucleoprotein; it reads LLSILCPVRKHKKS. Topologically, residues 1127–1135 are cytoplasmic; the sequence is CPVRKHKKS.

This sequence belongs to the hantavirus envelope glycoprotein family. In terms of assembly, homodimer. Homotetramer; forms heterotetrameric Gn-Gc spikes in the pre-fusion conformation. Interacts (via C-terminus) with the nucleoprotein. Interacts with host TUFM; this interaction contributes to the virus-induced degradation of mitochondria by autophagy, which leads to degradation of host MAVS and inhibition of type I interferon (IFN) responses. Interacts with host MAP1LC3B; this interaction contributes to the virus-induced degradation of mitochondria by autophagy, which leads to degradation of host MAVS and inhibition of type I interferon (IFN) responses. Homodimer. Homotetramer; forms heterotetrameric Gn-Gc spikes in the pre-fusion conformation. Homotrimer; forms homotrimer in the post-fusion conformation at acidic pH. Interacts (via C-terminus) with the nucleoprotein. Post-translationally, envelope polyprotein precursor is quickly cleaved in vivo just after synthesis, presumably by host signal peptidase.

It is found in the virion membrane. The protein resides in the host cell surface. It localises to the host Golgi apparatus membrane. The protein localises to the host endoplasmic reticulum membrane. Its subcellular location is the host mitochondrion. In terms of biological role, forms homotetramers with glycoprotein C at the surface of the virion. Attaches the virion to host cell receptors including integrin ITGAV/ITGB3. This attachment induces virion internalization predominantly through clathrin-dependent endocytosis. May also bind to host C1QBP for virus entry into the host cell. Mediates the assembly and budding of infectious virus particles through its interaction with the nucleocapsid protein and the viral genome. May dysregulate normal immune and endothelial cell responses through an ITAM motif. Translocates to mitochondria, binds to host TUFM and recruits MAP1LC3B. These interactions induce mitochondrial autophagy and therefore destruction of host MAVS leading to inhibition of type I interferon (IFN) responses. Concomitant breakdown of glycoprotein N is apparently prevented by the nucleoprotein that may inhibit Gn-stimulated autophagosome-lysosome fusion. Interacts with the viral genomic RNA. Its function is as follows. Forms homotetramers with glycoprotein N at the surface of the virion. Attaches the virion to host cell receptors including integrin ITGAV/ITGB3. This attachment induces virion internalization predominantly through clathrin-dependent endocytosis. May also bind to host C1QBP for virus entry into the host cell. Class II fusion protein that promotes fusion of viral membrane with host endosomal membrane after endocytosis of the virion. This chain is Envelopment polyprotein (GP), found in Hantaan virus (strain Lee) (Lee virus).